The chain runs to 353 residues: Melanin-concentrating hormone receptor 1 (353 aa).

Residues 1 to 31 are disordered; it reads MDLEASLLPTGPNTSNTSDGPDNLTSAGSPP. Topologically, residues 1–45 are extracellular; sequence MDLEASLLPTGPNTSNTSDGPDNLTSAGSPPRSGSVSYINIIMPS. A compositionally biased stretch (polar residues) spans 11 to 31; sequence GPNTSNTSDGPDNLTSAGSPP. 3 N-linked (GlcNAc...) asparagine glycosylation sites follow: Asn-13, Asn-16, and Asn-23. A helical membrane pass occupies residues 46-66; it reads VFGTICLLGIIGNSMVIFAVV. The Cytoplasmic segment spans residues 67–79; that stretch reads KKSKLHWCNNVPD. A helical membrane pass occupies residues 80-100; sequence IFIINLSVVDLLFLLGMPFMI. Residues 101 to 118 are Extracellular-facing; the sequence is HQLMGNGVWHFGETMCTL. Cys-116 and Cys-194 form a disulfide bridge. A helical transmembrane segment spans residues 119–139; that stretch reads ITAMDANSQFTSTYILTAMAI. Over 140–161 the chain is Cytoplasmic; it reads DRYLATVHPISSTKFRKPSVAT. The chain crosses the membrane as a helical span at residues 162 to 182; it reads LVICLLWALSFISITPVWLYA. The Extracellular segment spans residues 183–204; sequence RLIPFPGGAVGCGIRLPNPDTD. A helical membrane pass occupies residues 205 to 225; it reads LYWFTLYQFFLAFALPFVVIT. Residues 226-257 are Cytoplasmic-facing; that stretch reads AAYVRILQRMTSSVAPASQRSIRLRTKRVTRT. The chain crosses the membrane as a helical span at residues 258–278; it reads AIAICLVFFVCWAPYYVLQLT. Over 279–294 the chain is Extracellular; it reads QLSISRPTLTFVYLYN. Residues 295–315 form a helical membrane-spanning segment; that stretch reads AAISLGYANSCLNPFVYIVLC. Residues 316 to 353 are Cytoplasmic-facing; the sequence is ETFRKRLVLSVKPAAQGQLRAVSNAQTADEERTESKGT.

This sequence belongs to the G-protein coupled receptor 1 family. In terms of assembly, interacts with NCDN.

The protein resides in the cell membrane. In terms of biological role, receptor for melanin-concentrating hormone, coupled to both G proteins that inhibit adenylyl cyclase and G proteins that activate phosphoinositide hydrolysis. This Macaca mulatta (Rhesus macaque) protein is Melanin-concentrating hormone receptor 1.